We begin with the raw amino-acid sequence, 1244 residues long: Structural polyprotein (1244 aa).

The disordered stretch occupies residues 1 to 113; sequence MNSVFYNPFG…GKRQRTALKF (113 aa). Residues 35-44 are compositionally biased toward polar residues; that stretch reads GLTTQIQQLT. Positions 35-69 are host transcription inhibition; that stretch reads GLTTQIQQLTRAVRALVLDNATRRQRPAPRTRPRK. Basic residues predominate over residues 57 to 81; that stretch reads RRQRPAPRTRPRKPKTQKPKPKKQN. Positions 62–103 match the Nuclear localization signal motif; that stretch reads APRTRPRKPKTQKPKPKKQNQKPPQQQKKGKNQPQQPKKPKP. Residues 82–97 are compositionally biased toward low complexity; it reads QKPPQQQKKGKNQPQQ. The tract at residues 85 to 118 is binding to the viral RNA; sequence PQQQKKGKNQPQQPKKPKPGKRQRTALKFEADRT. The span at 99 to 109 shows a compositional bias: basic residues; sequence KKPKPGKRQRT. A ribosome-binding region spans residues 103-117; sequence PGKRQRTALKFEADR. Residues 117–267 enclose the Peptidase S3 domain; that stretch reads RTFVGKNEDG…KTTHEDTVEW (151 aa). Histidine 144 (charge relay system) is an active-site residue. Positions 149–159 match the Nuclear export signal motif; sequence IDHPALAKLKF. The interaction with spike glycoprotein E2 stretch occupies residues 160–165; sequence TKSSSY. Aspartate 166 functions as the Charge relay system in the catalytic mechanism. The segment at 188 to 198 is dimerization of the capsid protein; that stretch reads PEVFYNWHHGA. Catalysis depends on serine 218, which acts as the Charge relay system. The interval 224–228 is dimerization of the capsid protein; that stretch reads DNSGK. Positions 252–256 are interaction with spike glycoprotein E2; sequence KKGAA. The tract at residues 268-280 is functions as an uncleaved signal peptide for the precursor of protein E3/E2; that stretch reads SRAITAMCILQNV. At 268-696 the chain is on the extracellular side; that stretch reads SRAITAMCIL…HYYHLYPFYT (429 aa). N-linked (GlcNAc...) asparagine; by host glycosylation occurs at asparagine 279. 4 cysteine pairs are disulfide-bonded: cysteine 284/cysteine 290, cysteine 481/cysteine 595, cysteine 530/cysteine 555, and cysteine 532/cysteine 549. An N-linked (GlcNAc...) asparagine; by host glycan is attached at asparagine 525. Residue asparagine 647 is glycosylated (N-linked (GlcNAc...) asparagine; by host). The chain crosses the membrane as a helical span at residues 697 to 717; it reads VTVLSGMGLAICAGLVISILC. Residues 718–751 are Cytoplasmic-facing; that stretch reads CCKARRDCLTPYQLAPNATVPFLVTLCCCFQRTS. Residues 720–724 form an interaction with the capsid protein region; that stretch reads KARRD. Residues cysteine 725, cysteine 745, and cysteine 746 are each lipidated (S-palmitoyl cysteine; by host). Cysteine 725 and cysteine 746 are disulfide-bonded. Over 752–764 the chain is Extracellular; it reads ADEFTDTMGYLWQ. Transmembrane regions (helical) follow at residues 765-785 and 786-805; these read HSQT…ITLV and RCCS…NKAD. Over 806–1218 the chain is Extracellular; it reads AYEHTITVPN…KTSWNWITAL (413 aa). 4 disulfides stabilise this stretch: cysteine 855–cysteine 920, cysteine 868–cysteine 900, cysteine 869–cysteine 902, and cysteine 874–cysteine 884. An E1 fusion peptide loop region spans residues 890–907; the sequence is VYPFLWGGAQCFCDSENS. Residues asparagine 945 and asparagine 1051 are each glycosylated (N-linked (GlcNAc...) asparagine; by host). 4 disulfides stabilise this stretch: cysteine 1065–cysteine 1077, cysteine 1106–cysteine 1181, cysteine 1111–cysteine 1185, and cysteine 1133–cysteine 1175. A helical transmembrane segment spans residues 1219 to 1239; the sequence is MGGISSIAAIAAIVLVIALVF. Topologically, residues 1240 to 1244 are cytoplasmic; the sequence is TAQHR.

As to quaternary structure, homodimer. Homomultimer. Interacts with host karyopherin KPNA4; this interaction allows the nuclear import of the viral capsid protein. Interacts with spike glycoprotein E2. Interacts with host IRAK1; the interaction leads to inhibition of IRAK1-dependent signaling. In terms of assembly, the precursor of protein E3/E2 and E1 form a heterodimer shortly after synthesis. The precursor of protein E3/E2 and E1 form a heterodimer shortly after synthesis. Processing of the precursor of protein E3/E2 into E2 and E3 results in a heterodimer of the spike glycoproteins E2 and E1. Spike at virion surface are constituted of a trimer of E2-E1 heterodimers. After target cell attachment and endocytosis, E1 change conformation to form homotrimers. Interacts with 6K protein. As to quaternary structure, interacts with spike glycoprotein E1. Processing of the precursor of protein E3/E2 into E2 and E3 results in a heterodimer of the spike glycoproteins E2 and E1. Spike at virion surface are constituted of a trimer of E2-E1 heterodimers. Interacts with 6K protein. In terms of assembly, oligomer. Interacts with spike glycoprotein E1. Interacts with spike glycoprotein E2. Post-translationally, structural polyprotein: Specific enzymatic cleavages in vivo yield mature proteins. Capsid protein is auto-cleaved during polyprotein translation, unmasking a signal peptide at the N-terminus of the precursor of E3/E2. The remaining polyprotein is then targeted to the host endoplasmic reticulum, where host signal peptidase cleaves it into pE2, 6K and E1 proteins. pE2 is further processed to mature E3 and E2 by host furin in trans-Golgi vesicle. Palmitoylated via thioester bonds. These palmitoylations may induce disruption of the C-terminus transmembrane. This would result in the reorientation of E2 C-terminus from lumenal to cytoplasmic side. In terms of processing, N-glycosylated. Post-translationally, palmitoylated via thioester bonds.

It is found in the virion. The protein localises to the host cytoplasm. The protein resides in the host cell membrane. It localises to the host nucleus. Its subcellular location is the virion membrane. It is found in the host Golgi apparatus. The protein localises to the host trans-Golgi network. The protein resides in the host endoplasmic reticulum. It carries out the reaction Autocatalytic release of the core protein from the N-terminus of the togavirus structural polyprotein by hydrolysis of a -Trp-|-Ser- bond.. In terms of biological role, forms an icosahedral capsid with a T=4 symmetry composed of 240 copies of the capsid protein surrounded by a lipid membrane through which penetrate 80 spikes composed of trimers of E1-E2 heterodimers. The capsid protein binds to the viral RNA genome at a site adjacent to a ribosome binding site for viral genome translation following genome release. Possesses a protease activity that results in its autocatalytic cleavage from the nascent structural protein. Following its self-cleavage, the capsid protein transiently associates with ribosomes, and within several minutes the protein binds to viral RNA and rapidly assembles into icosahedric core particles. The resulting nucleocapsid eventually associates with the cytoplasmic domain of the spike glycoprotein E2 at the cell membrane, leading to budding and formation of mature virions. In case of infection, new virions attach to target cells and after clathrin-mediated endocytosis their membrane fuses with the host endosomal membrane. This leads to the release of the nucleocapsid into the cytoplasm, followed by an uncoating event necessary for the genomic RNA to become accessible. The uncoating might be triggered by the interaction of capsid proteins with ribosomes. Binding of ribosomes would release the genomic RNA since the same region is genomic RNA-binding and ribosome-binding. Specifically inhibits interleukin-1 receptor-associated kinase 1/IRAK1-dependent signaling during viral entry, representing a means by which the alphaviruses may evade innate immune detection and activation prior to viral gene expression. Its function is as follows. Provides the signal sequence for the translocation of the precursor of protein E3/E2 to the host endoplasmic reticulum. Furin-cleaved E3 remains associated with spike glycoprotein E1 and mediates pH protection of the latter during the transport via the secretory pathway. After virion release from the host cell, the assembly protein E3 is gradually released in the extracellular space. Functionally, plays a role in viral attachment to target host cell, by binding to the cell receptor. Synthesized as a p62 precursor which is processed by furin at the cell membrane just before virion budding, giving rise to E2-E1 heterodimer. The p62-E1 heterodimer is stable, whereas E2-E1 is unstable and dissociate at low pH. p62 is processed at the last step, presumably to avoid E1 fusion activation before its final export to cell surface. E2 C-terminus contains a transitory transmembrane that would be disrupted by palmitoylation, resulting in reorientation of the C-terminal tail from lumenal to cytoplasmic side. This step is critical since E2 C-terminus is involved in budding by interacting with capsid proteins. This release of E2 C-terminus in cytoplasm occurs lately in protein export, and precludes premature assembly of particles at the endoplasmic reticulum membrane. Acts as a viroporin that participates in virus glycoprotein processing and transport to the plasma membrane, cell permeabilization and budding of viral particles. Disrupts the calcium homeostasis of the cell, probably at the endoplasmic reticulum level. This leads to cytoplasmic calcium elevation. Because of its lipophilic properties, the 6K protein is postulated to influence the selection of lipids that interact with the transmembrane domains of the glycoproteins, which, in turn, affects the deformability of the bilayer required for the extreme curvature that occurs as budding proceeds. Present in low amount in virions, about 3% compared to viral glycoproteins. In terms of biological role, class II viral fusion protein. Fusion activity is inactive as long as E1 is bound to E2 in mature virion. After virus attachment to target cell and endocytosis, acidification of the endosome induce dissociation of E1/E2 heterodimer and concomitant trimerization of the E1 subunits. This E1 trimer is fusion active, and promotes release of viral nucleocapsid in cytoplasm after endosome and viral membrane fusion. Efficient fusion requires the presence of cholesterol and sphingolipid in the target membrane. The protein is Structural polyprotein of Aedes (AURAV).